Reading from the N-terminus, the 1744-residue chain is Retrotransposon-like protein 1 (1744 aa).

3 disordered regions span residues 1 to 416 (MIEP…SPEE), 823 to 859 (READ…DQSG), and 1287 to 1439 (SSET…EVPS). A compositionally biased stretch (low complexity) spans 19-30 (SSKQMESSEGSS). Residues 31-40 (NTVEETPGSS) show a composition bias toward polar residues. Residues 41-80 (GAQAGAQAGAQAEAQAETQVEAQAEAQAEAQVEAQVEAQA) show a composition bias toward low complexity. The span at 269 to 318 (DGSNQESSDGSNHELSNGSNHESSFGSNPESSDVSNLESSGGSNQESSDG) shows a compositional bias: polar residues. Over residues 332–361 (SDNSNQELSDNSNQESSDSSNQSSDISNQE) the composition is skewed to low complexity. Acidic residues-rich tracts occupy residues 385–407 (SDQD…GEEE), 837–846 (GSDDLSESEP), and 1291–1437 (EDKE…DEEV). 2 helical membrane passes run 1473 to 1493 (FFRG…LVML) and 1520 to 1540 (LILD…AQLL).

Expressed in placenta and in various tissues in late-fetal stage.

The protein resides in the membrane. Its function is as follows. Plays an essential role in capillaries endothelial cells for the maintenance of feto-maternal interface and for development of the placenta. This chain is Retrotransposon-like protein 1 (Rtl1), found in Mus musculus (Mouse).